The primary structure comprises 346 residues: Anthranilate phosphoribosyltransferase (346 aa).

5-phospho-alpha-D-ribose 1-diphosphate-binding positions include Gly-81, 84 to 85 (GD), 91 to 94 (NVST), 109 to 117 (KHGGRSVSS), and Ser-121. Gly-81 lines the anthranilate pocket. Ser-93 lines the Mg(2+) pocket. Arg-167 is a binding site for anthranilate. Positions 226 and 227 each coordinate Mg(2+).

It belongs to the anthranilate phosphoribosyltransferase family. As to quaternary structure, homodimer. Mg(2+) is required as a cofactor.

It catalyses the reaction N-(5-phospho-beta-D-ribosyl)anthranilate + diphosphate = 5-phospho-alpha-D-ribose 1-diphosphate + anthranilate. Its pathway is amino-acid biosynthesis; L-tryptophan biosynthesis; L-tryptophan from chorismate: step 2/5. Its function is as follows. Catalyzes the transfer of the phosphoribosyl group of 5-phosphorylribose-1-pyrophosphate (PRPP) to anthranilate to yield N-(5'-phosphoribosyl)-anthranilate (PRA). This Marinomonas sp. (strain MWYL1) protein is Anthranilate phosphoribosyltransferase.